The primary structure comprises 167 residues: Endoribonuclease YbeY (167 aa).

Residues His-131, His-135, and His-141 each contribute to the Zn(2+) site.

The protein belongs to the endoribonuclease YbeY family. It depends on Zn(2+) as a cofactor.

The protein localises to the cytoplasm. Its function is as follows. Single strand-specific metallo-endoribonuclease involved in late-stage 70S ribosome quality control and in maturation of the 3' terminus of the 16S rRNA. This chain is Endoribonuclease YbeY, found in Rickettsia akari (strain Hartford).